The chain runs to 449 residues: Plasmepsin IV (449 aa).

Over 1 to 37 (MALTVKEEEFSNTLIKNASAFDRLKLGNLKNLKIQKK) the chain is Cytoplasmic. Residues 1–121 (MALTVKEEEF…SGYAQKGYLG (121 aa)) constitute a propeptide that is removed on maturation. A helical; Signal-anchor for type II membrane protein transmembrane segment spans residues 38–58 (LQFLYLILFVLITGVFFFFLI). The Lumenal segment spans residues 59–449 (GNFYSHRKLY…SVGFAVAKNL (391 aa)). The region spanning 137–444 (FYGEGQIGTN…DYEKESVGFA (308 aa)) is the Peptidase A1 domain. Residue aspartate 155 is part of the active site. Cysteines 168 and 173 form a disulfide. Aspartate 335 is an active-site residue. Cysteine 370 and cysteine 406 are oxidised to a cystine.

The protein belongs to the peptidase A1 family. Component of the hemozoin formation complex (HFC) composed of falcipains FP2A and/or FP2B, plasmepsins PMII, PMIII/HAP and PMIV, heme detoxifying protein HDP and falcilysin FLN. The HFC complex is involved in hemoglobin degradation and detoxification of heme in the food vacuole during the asexual blood stage. Proteolytically cleaved into the soluble active mature form by cysteine proteases in the digestive vacuole of trophozoites. Proteolysis requires an acidic environment. Autoprocessing or transprocessing by other plasmepsins such as PMII may serve as an alternate activation system.

The protein resides in the membrane. It is found in the vacuole lumen. The catalysed reaction is Hydrolysis of the bonds linking certain hydrophobic residues in hemoglobin or globin. Also cleaves small molecules substrates such as Ala-Leu-Glu-Arg-Thr-Phe-|-Phe(NO2)-Ser-Phe-Pro-Thr.. Its activity is regulated as follows. Inhibited by KNI derived compounds KNI-10333 and to a lesser extent KNI-10743. Its function is as follows. During the asexual blood stage, catalyzes the cleavage of denatured host hemoglobin (Hb). Digestion of host Hb is an essential step which provides the parasite with amino acids for protein synthesis, and regulates osmolarity. The polypeptide is Plasmepsin IV (Plasmodium falciparum (isolate 3D7)).